A 415-amino-acid polypeptide reads, in one-letter code: Multidrug resistance protein MdtA (415 aa).

An N-terminal signal peptide occupies residues 1–21 (MKGSYKSRWVIVIVVVIAAIA). Positions 31–47 (DSQSAAPGATKQAQQSP) are enriched in polar residues. 2 disordered regions span residues 31–56 (DSQS…GMRA) and 390–415 (VVET…GARS). Residues 399–415 (PEEKATSREYAKKGARS) are compositionally biased toward basic and acidic residues.

Belongs to the membrane fusion protein (MFP) (TC 8.A.1) family. In terms of assembly, part of a tripartite efflux system composed of MdtA, MdtB and MdtC.

It is found in the cell inner membrane. Functionally, the MdtABC tripartite complex confers resistance against novobiocin and deoxycholate. This Escherichia coli O6:H1 (strain CFT073 / ATCC 700928 / UPEC) protein is Multidrug resistance protein MdtA.